The following is a 1006-amino-acid chain: Unconventional myosin-Id (1006 aa).

Position 2 is an N-acetylalanine (alanine 2). Positions phenylalanine 9 to alanine 695 constitute a Myosin motor domain. ATP is bound at residue glycine 102–threonine 109. Serine 200 carries the phosphoserine modification. A Phosphotyrosine modification is found at tyrosine 536. The interval methionine 572–aspartate 594 is actin-binding. IQ domains follow at residues valine 699–lysine 719 and threonine 721–histidine 741. The TH1 domain occupies glycine 812–glycine 1005.

Belongs to the TRAFAC class myosin-kinesin ATPase superfamily. Myosin family. Interacts (via the two IQ motifs) with calmodulin. Binds an additional calmodulin chain via a third, C-terminal region. Interacts with F-actin. As to expression, detected in enterocytes at the intestinal brush border membrane. Detected at the tip of intestinal microvilli (at protein level).

It is found in the cytoplasm. The protein resides in the perikaryon. It localises to the cell projection. Its subcellular location is the dendrite. The protein localises to the early endosome. It is found in the cell cortex. The protein resides in the basolateral cell membrane. In terms of biological role, unconventional myosin that functions as actin-based motor protein with ATPase activity. Plays a role in endosomal protein trafficking, and especially in the transfer of cargo proteins from early to recycling endosomes. Required for normal planar cell polarity in ciliated tracheal cells, for normal rotational polarity of cilia, and for coordinated, unidirectional ciliary movement in the trachea. Required for normal, polarized cilia organization in brain ependymal epithelial cells. This chain is Unconventional myosin-Id, found in Mus musculus (Mouse).